Here is a 199-residue protein sequence, read N- to C-terminus: NAD(P)H-quinone oxidoreductase chain 6 (199 aa).

A run of 5 helical transmembrane segments spans residues 9–29 (IVSF…VVLL), 32–52 (VVYS…LYLL), 61–81 (AQVL…IMLV), 102–122 (LVCA…PWAI), and 143–163 (FLLP…GAIV).

Belongs to the complex I subunit 6 family.

Its subcellular location is the membrane. It catalyses the reaction a plastoquinone + NADH + (n+1) H(+)(in) = a plastoquinol + NAD(+) + n H(+)(out). The enzyme catalyses a plastoquinone + NADPH + (n+1) H(+)(in) = a plastoquinol + NADP(+) + n H(+)(out). Functionally, NDH-1 shuttles electrons from NAD(P)H, via FMN and iron-sulfur (Fe-S) centers, to quinones in the respiratory chain. The immediate electron acceptor for the enzyme in this species is believed to be plastoquinone. Couples the redox reaction to proton translocation (for every two electrons transferred, four hydrogen ions are translocated across the cytoplasmic membrane), and thus conserves the redox energy in a proton gradient. This chain is NAD(P)H-quinone oxidoreductase chain 6 (ndhG), found in Leptolyngbya boryana (Plectonema boryanum).